The following is a 103-amino-acid chain: ATP-dependent Clp protease adapter protein ClpS (103 aa).

This sequence belongs to the ClpS family. Binds to the N-terminal domain of the chaperone ClpA.

Its function is as follows. Involved in the modulation of the specificity of the ClpAP-mediated ATP-dependent protein degradation. The sequence is that of ATP-dependent Clp protease adapter protein ClpS from Nitrosomonas eutropha (strain DSM 101675 / C91 / Nm57).